Here is a 292-residue protein sequence, read N- to C-terminus: MFKIYNIKSRIIRENMNNKLFDKTIEHVIKYLNENIFFEKYTRISGLLQNIESRIKIISLVIFLVGSVLSKHILTLIIFNSIALILAYLSNIPLLQYLKRVYVFIPIFAGIIAIPVMFNFMTPGKDVFVILNNPHISITYEGLIYAITFTLRVATCVSFAVLIPITTQWNKVTSAIHKLGVPEVVITITNLAYRYIFLLLNFVLDMMYSRKSRVVNKLGMVESWKEAGKAIGALFIKTYQMGEDXYYAMLSRGYNGEIKHIYREEIKIKDIAFLLFSIIITALLVLFDRGIL.

Helical transmembrane passes span 57–77, 101–121, 143–163, 184–204, and 271–291; these read IISL…LTLI, VYVF…FNFM, LIYA…AVLI, VVIT…NFVL, and IAFL…DRGI.

This sequence belongs to the CbiQ family.

It is found in the cell membrane. This is an uncharacterized protein from Methanocaldococcus jannaschii (strain ATCC 43067 / DSM 2661 / JAL-1 / JCM 10045 / NBRC 100440) (Methanococcus jannaschii).